We begin with the raw amino-acid sequence, 179 residues long: Orotate phosphoribosyltransferase (179 aa).

Residues R94, K95, K98, H100, and 120 to 128 contribute to the 5-phospho-alpha-D-ribose 1-diphosphate site; that span reads EDTSTTGAS. T124 and R152 together coordinate orotate.

Belongs to the purine/pyrimidine phosphoribosyltransferase family. PyrE subfamily. Homodimer. It depends on Mg(2+) as a cofactor.

It catalyses the reaction orotidine 5'-phosphate + diphosphate = orotate + 5-phospho-alpha-D-ribose 1-diphosphate. The protein operates within pyrimidine metabolism; UMP biosynthesis via de novo pathway; UMP from orotate: step 1/2. Catalyzes the transfer of a ribosyl phosphate group from 5-phosphoribose 1-diphosphate to orotate, leading to the formation of orotidine monophosphate (OMP). The polypeptide is Orotate phosphoribosyltransferase (Mycobacterium leprae (strain TN)).